Here is a 122-residue protein sequence, read N- to C-terminus: Small ribosomal subunit protein uS13 (122 aa).

The tract at residues 97 to 122 (PVRGQRTHTNAKTRKGRSKLPIAGKK) is disordered.

Belongs to the universal ribosomal protein uS13 family. In terms of assembly, part of the 30S ribosomal subunit. Forms a loose heterodimer with protein S19. Forms two bridges to the 50S subunit in the 70S ribosome.

Located at the top of the head of the 30S subunit, it contacts several helices of the 16S rRNA. In the 70S ribosome it contacts the 23S rRNA (bridge B1a) and protein L5 of the 50S subunit (bridge B1b), connecting the 2 subunits; these bridges are implicated in subunit movement. Contacts the tRNAs in the A and P-sites. This is Small ribosomal subunit protein uS13 from Wolbachia pipientis subsp. Culex pipiens (strain wPip).